The sequence spans 498 residues: ATP synthase subunit beta, chloroplastic (498 aa).

Residue glycine 172 to threonine 179 coordinates ATP.

This sequence belongs to the ATPase alpha/beta chains family. F-type ATPases have 2 components, CF(1) - the catalytic core - and CF(0) - the membrane proton channel. CF(1) has five subunits: alpha(3), beta(3), gamma(1), delta(1), epsilon(1). CF(0) has four main subunits: a(1), b(1), b'(1) and c(9-12).

It is found in the plastid. The protein resides in the chloroplast thylakoid membrane. It catalyses the reaction ATP + H2O + 4 H(+)(in) = ADP + phosphate + 5 H(+)(out). Functionally, produces ATP from ADP in the presence of a proton gradient across the membrane. The catalytic sites are hosted primarily by the beta subunits. This is ATP synthase subunit beta, chloroplastic from Trochodendron aralioides (Wheel tree).